The chain runs to 446 residues: Phosphoglucosamine mutase (446 aa).

The Phosphoserine intermediate role is filled by Ser103. The Mg(2+) site is built by Ser103, Asp242, Asp244, and Asp246. A Phosphoserine modification is found at Ser103.

Belongs to the phosphohexose mutase family. It depends on Mg(2+) as a cofactor. Post-translationally, activated by phosphorylation.

It carries out the reaction alpha-D-glucosamine 1-phosphate = D-glucosamine 6-phosphate. Functionally, catalyzes the conversion of glucosamine-6-phosphate to glucosamine-1-phosphate. This Vibrio cholerae serotype O1 (strain ATCC 39315 / El Tor Inaba N16961) protein is Phosphoglucosamine mutase.